We begin with the raw amino-acid sequence, 443 residues long: Sulfoquinovose isomerase (443 aa).

Belongs to the SqvD family.

It carries out the reaction 6-sulfo-beta-D-quinovose = 6-deoxy-6-sulfo-D-fructose. Part of the sulfo-EMP2 pathway, a D-sulfoquinovose degradation pathway that produces sulfolactate (SL). Catalyzes the isomerization of sulfoquinovose (SQ) to 6-deoxy-6-sulfo-D-fructose (SF). The polypeptide is Sulfoquinovose isomerase (Alkalicoccus urumqiensis (Bacillus urumqiensis)).